The chain runs to 527 residues: Peptide chain release factor 3 (527 aa).

Positions 9-278 (NKRRTFAIIS…GLTQWAPKPQ (270 aa)) constitute a tr-type G domain. GTP contacts are provided by residues 18–25 (SHPDAGKT), 86–90 (DTPGH), and 140–143 (NKLD).

It belongs to the TRAFAC class translation factor GTPase superfamily. Classic translation factor GTPase family. PrfC subfamily.

The protein localises to the cytoplasm. In terms of biological role, increases the formation of ribosomal termination complexes and stimulates activities of RF-1 and RF-2. It binds guanine nucleotides and has strong preference for UGA stop codons. It may interact directly with the ribosome. The stimulation of RF-1 and RF-2 is significantly reduced by GTP and GDP, but not by GMP. The sequence is that of Peptide chain release factor 3 from Haemophilus influenzae (strain 86-028NP).